The sequence spans 927 residues: Translation initiation factor IF-2 (927 aa).

The segment at 27–338 (LGLPVKSHAS…APKPVTERKF (312 aa)) is disordered. The segment covering 49-69 (SFSSSKTKAPTNSVQTNQGVK) has biased composition (polar residues). Basic and acidic residues-rich tracts occupy residues 70–86 (TESKTVETKQGLSDDKP) and 101–138 (FKAEREARAKAEAEKRQHNGDHRKNNRHNDTRSDDRRH). Residues 146–159 (GNRNDNRQGQQNNR) show a composition bias toward low complexity. Composition is skewed to basic and acidic residues over residues 160–171 (NKNDGRYADHKQ), 202–226 (YSRHSEQRFREEQEAKRQAAKEQEL), and 234–257 (AQEEAQKAKEKLASKPVAKVKEIV). Positions 300–316 (NWNNQNQVRNQRNSNWN) are enriched in low complexity. Residues 428-597 (ERPPVVTIMG…LLVAEMEELK (170 aa)) form the tr-type G domain. The tract at residues 437 to 444 (GHVDHGKT) is G1. Residue 437 to 444 (GHVDHGKT) coordinates GTP. Residues 462 to 466 (GITQH) are G2. Positions 483-486 (DTPG) are G3. Residues 483 to 487 (DTPGH) and 537 to 540 (NKID) contribute to the GTP site. Residues 537-540 (NKID) are G4. The G5 stretch occupies residues 573–575 (SAK).

It belongs to the TRAFAC class translation factor GTPase superfamily. Classic translation factor GTPase family. IF-2 subfamily.

It is found in the cytoplasm. Its function is as follows. One of the essential components for the initiation of protein synthesis. Protects formylmethionyl-tRNA from spontaneous hydrolysis and promotes its binding to the 30S ribosomal subunits. Also involved in the hydrolysis of GTP during the formation of the 70S ribosomal complex. This chain is Translation initiation factor IF-2, found in Streptococcus agalactiae serotype Ia (strain ATCC 27591 / A909 / CDC SS700).